The primary structure comprises 397 residues: Lipid-A-disaccharide synthase (397 aa).

Belongs to the LpxB family.

It catalyses the reaction a lipid X + a UDP-2-N,3-O-bis[(3R)-3-hydroxyacyl]-alpha-D-glucosamine = a lipid A disaccharide + UDP + H(+). Its pathway is bacterial outer membrane biogenesis; LPS lipid A biosynthesis. In terms of biological role, condensation of UDP-2,3-diacylglucosamine and 2,3-diacylglucosamine-1-phosphate to form lipid A disaccharide, a precursor of lipid A, a phosphorylated glycolipid that anchors the lipopolysaccharide to the outer membrane of the cell. This is Lipid-A-disaccharide synthase from Mannheimia succiniciproducens (strain KCTC 0769BP / MBEL55E).